A 365-amino-acid polypeptide reads, in one-letter code: Heterogeneous nuclear ribonucleoproteins A1 homolog (365 aa).

The tract at residues 4–94 (SEAPNEPEQL…EPKRAVSRED (91 aa)) is globular A domain. RRM domains lie at 14 to 97 (RKLF…DSSR) and 105 to 184 (KKIF…LSKQ). The segment at 95–185 (SSRPGAHLTV…QVRKALSKQE (91 aa)) is globular B domain. Disordered regions lie at residues 175–208 (SQVRKALSKQEMASVSGSQRERGGSGNYGSRGGF) and 328–365 (GPMKGGNYGGGRNSGPYGGGYGGGSASSSSGYGGGRRF). 2 stretches are compositionally biased toward gly residues: residues 198–208 (GSGNYGSRGGF) and 330–365 (MKGGNYGGGRNSGPYGGGYGGGSASSSSGYGGGRRF). The segment at 321-359 (SQSSSNFGPMKGGNYGGGRNSGPYGGGYGGGSASSSSGY) is nuclear targeting sequence.

The protein localises to the nucleus. Its subcellular location is the cytoplasm. Functionally, this protein is a component of ribonucleosomes. This Xenopus laevis (African clawed frog) protein is Heterogeneous nuclear ribonucleoproteins A1 homolog (hnrnpa1).